The following is a 139-amino-acid chain: ATP synthase epsilon chain (139 aa).

Positions E89–H110 are disordered.

It belongs to the ATPase epsilon chain family. In terms of assembly, F-type ATPases have 2 components, CF(1) - the catalytic core - and CF(0) - the membrane proton channel. CF(1) has five subunits: alpha(3), beta(3), gamma(1), delta(1), epsilon(1). CF(0) has three main subunits: a, b and c.

Its subcellular location is the cell membrane. Its function is as follows. Produces ATP from ADP in the presence of a proton gradient across the membrane. In Chloroflexus aggregans (strain MD-66 / DSM 9485), this protein is ATP synthase epsilon chain.